Reading from the N-terminus, the 24-residue chain is Ascaphin-4 (24 aa).

Expressed by the skin glands.

The protein resides in the secreted. Functionally, antimicrobial peptide that shows higher potency against Gram-negative bacteria than against Gram-positive bacteria. Has a very week hemolytic activity. The sequence is that of Ascaphin-4 from Ascaphus truei (Coastal tailed frog).